Consider the following 208-residue polypeptide: Large ribosomal subunit protein uL3 (208 aa).

Residue Gln149 is modified to N5-methylglutamine.

It belongs to the universal ribosomal protein uL3 family. Part of the 50S ribosomal subunit. Forms a cluster with proteins L14 and L19. Methylated by PrmB.

In terms of biological role, one of the primary rRNA binding proteins, it binds directly near the 3'-end of the 23S rRNA, where it nucleates assembly of the 50S subunit. This is Large ribosomal subunit protein uL3 from Haemophilus ducreyi (strain 35000HP / ATCC 700724).